The sequence spans 276 residues: Putative pyruvate, phosphate dikinase regulatory protein 2 (276 aa).

146–153 (GVSRTSKT) is an ADP binding site.

This sequence belongs to the pyruvate, phosphate/water dikinase regulatory protein family. PDRP subfamily.

The enzyme catalyses N(tele)-phospho-L-histidyl/L-threonyl-[pyruvate, phosphate dikinase] + ADP = N(tele)-phospho-L-histidyl/O-phospho-L-threonyl-[pyruvate, phosphate dikinase] + AMP + H(+). It carries out the reaction N(tele)-phospho-L-histidyl/O-phospho-L-threonyl-[pyruvate, phosphate dikinase] + phosphate + H(+) = N(tele)-phospho-L-histidyl/L-threonyl-[pyruvate, phosphate dikinase] + diphosphate. In terms of biological role, bifunctional serine/threonine kinase and phosphorylase involved in the regulation of the pyruvate, phosphate dikinase (PPDK) by catalyzing its phosphorylation/dephosphorylation. This is Putative pyruvate, phosphate dikinase regulatory protein 2 from Enterococcus faecalis (strain ATCC 700802 / V583).